Consider the following 141-residue polypeptide: uncharacterized protein (141 aa).

2 helical membrane passes run 12-32 (GIAG…TLVT) and 35-55 (PGRV…SATW).

The protein localises to the cell membrane. This is an uncharacterized protein from Mycobacterium tuberculosis (strain CDC 1551 / Oshkosh).